The sequence spans 406 residues: Succinylornithine transaminase (406 aa).

Position 252 is an N6-(pyridoxal phosphate)lysine (K252).

It belongs to the class-III pyridoxal-phosphate-dependent aminotransferase family. AstC subfamily. It depends on pyridoxal 5'-phosphate as a cofactor.

The enzyme catalyses N(2)-succinyl-L-ornithine + 2-oxoglutarate = N-succinyl-L-glutamate 5-semialdehyde + L-glutamate. It participates in amino-acid degradation; L-arginine degradation via AST pathway; L-glutamate and succinate from L-arginine: step 3/5. Functionally, catalyzes the transamination of N(2)-succinylornithine and alpha-ketoglutarate into N(2)-succinylglutamate semialdehyde and glutamate. Can also act as an acetylornithine aminotransferase. The polypeptide is Succinylornithine transaminase (Escherichia coli O17:K52:H18 (strain UMN026 / ExPEC)).